Reading from the N-terminus, the 582-residue chain is Trans-ocimene synthase, chloroplastic (582 aa).

The transit peptide at 1–35 directs the protein to the chloroplast; that stretch reads MSLIIQSLPHWSRIPPRPPQLSQFQNSSRPKPLIQ. (2E)-geranyl diphosphate contacts are provided by arginine 296, aspartate 333, aspartate 337, arginine 474, and aspartate 477. Residues aspartate 333 and aspartate 337 each coordinate Mg(2+). Residues 333–337 carry the DDXXD motif motif; that stretch reads DDIYD. 3 residues coordinate Mg(2+): aspartate 477, threonine 481, and glutamate 485.

This sequence belongs to the terpene synthase family. Tpsb subfamily. Monomer. The cofactor is Mg(2+). Mn(2+) is required as a cofactor. As to expression, expressed in male and female leaves. Barely detectable in fruits and shoots.

It is found in the plastid. Its subcellular location is the chloroplast. It catalyses the reaction (2E)-geranyl diphosphate = (E)-beta-ocimene + diphosphate. It participates in secondary metabolite biosynthesis; terpenoid biosynthesis. Its function is as follows. Monoterpene synthase (TPS) involved in the biosynthesis of monoterpene natural products used by traditional Chinese medicine to treat headache, inflammation and intoxication. Catalyzes the conversion of (2E)-geranyl diphosphate (GPP) into (E)-beta-ocimene. This chain is Trans-ocimene synthase, chloroplastic, found in Litsea cubeba (Aromatic litsea).